Consider the following 194-residue polypeptide: Prostaglandin-H2 D-isomerase (194 aa).

A signal peptide spans 1–24 (MAASHTLWMGLVLLGVLGVLQTRA). Residue glutamine 25 is modified to Pyrrolidone carboxylic acid. Asparagine 51 carries an N-linked (GlcNAc...) asparagine glycan. The active-site Nucleophile is cysteine 65. A glycan (N-linked (GlcNAc...) asparagine) is linked at asparagine 78. Cysteine 89 and cysteine 189 form a disulfide bridge.

The protein belongs to the calycin superfamily. Lipocalin family. As to quaternary structure, monomer. In the male reproductive system, it is expressed in the testis and epididymis, and is secreted into the seminal fluid.

It localises to the rough endoplasmic reticulum. The protein resides in the nucleus membrane. It is found in the golgi apparatus. The protein localises to the cytoplasm. Its subcellular location is the perinuclear region. It localises to the secreted. The enzyme catalyses prostaglandin H2 = prostaglandin D2. In terms of biological role, catalyzes the conversion of PGH2 to PGD2, a prostaglandin involved in smooth muscle contraction/relaxation and a potent inhibitor of platelet aggregation. Involved in a variety of CNS functions, such as sedation, NREM sleep and PGE2-induced allodynia, and may have an anti-apoptotic role in oligodendrocytes. Binds small non-substrate lipophilic molecules, including biliverdin, bilirubin, retinal, retinoic acid and thyroid hormone, and may act as a scavenger for harmful hydrophobic molecules and as a secretory retinoid and thyroid hormone transporter. Possibly involved in development and maintenance of the blood-brain, blood-retina, blood-aqueous humor and blood-testis barrier. It is likely to play important roles in both maturation and maintenance of the central nervous system and male reproductive system. Involved in PLA2G3-dependent maturation of mast cells. PLA2G3 is secreted by immature mast cells and acts on nearby fibroblasts upstream to PTDGS to synthesize PGD2, which in turn promotes mast cell maturation and degranulation via PTGDR. The polypeptide is Prostaglandin-H2 D-isomerase (PTGDS) (Equus caballus (Horse)).